A 239-amino-acid polypeptide reads, in one-letter code: DNA repair protein RecO (239 aa).

Belongs to the RecO family.

Functionally, involved in DNA repair and RecF pathway recombination. The sequence is that of DNA repair protein RecO from Christiangramia forsetii (strain DSM 17595 / CGMCC 1.15422 / KT0803) (Gramella forsetii).